The primary structure comprises 232 residues: Ribonuclease 3 (232 aa).

In terms of domain architecture, RNase III spans 7 to 136 (AALLEDTIDY…LLGAVFCDGG (130 aa)). Glutamate 49 serves as a coordination point for Mg(2+). The active site involves aspartate 53. Residues asparagine 122 and glutamate 125 each coordinate Mg(2+). Glutamate 125 is an active-site residue. The 70-residue stretch at 163–232 (DYKTRLQERL…AKQALEYLEE (70 aa)) folds into the DRBM domain.

The protein belongs to the ribonuclease III family. As to quaternary structure, homodimer. Mg(2+) serves as cofactor.

The protein localises to the cytoplasm. It carries out the reaction Endonucleolytic cleavage to 5'-phosphomonoester.. Functionally, digests double-stranded RNA. Involved in the processing of primary rRNA transcript to yield the immediate precursors to the large and small rRNAs (23S and 16S). Processes some mRNAs, and tRNAs when they are encoded in the rRNA operon. Processes pre-crRNA and tracrRNA of type II CRISPR loci if present in the organism. This is Ribonuclease 3 from Syntrophotalea carbinolica (strain DSM 2380 / NBRC 103641 / GraBd1) (Pelobacter carbinolicus).